A 360-amino-acid chain; its full sequence is Mannonate dehydratase (360 aa).

It belongs to the mannonate dehydratase family. It depends on Fe(2+) as a cofactor. The cofactor is Mn(2+).

It carries out the reaction D-mannonate = 2-dehydro-3-deoxy-D-gluconate + H2O. It functions in the pathway carbohydrate metabolism; pentose and glucuronate interconversion. Its function is as follows. Catalyzes the dehydration of D-mannonate. This is Mannonate dehydratase (uxuA) from Thermotoga neapolitana.